The following is a 225-amino-acid chain: tRNA (guanine-N(1)-)-methyltransferase (225 aa).

S-adenosyl-L-methionine is bound by residues G110 and 130-135 (VGDYVL).

It belongs to the RNA methyltransferase TrmD family. In terms of assembly, homodimer.

It is found in the cytoplasm. The catalysed reaction is guanosine(37) in tRNA + S-adenosyl-L-methionine = N(1)-methylguanosine(37) in tRNA + S-adenosyl-L-homocysteine + H(+). Functionally, specifically methylates guanosine-37 in various tRNAs. This Neorickettsia sennetsu (strain ATCC VR-367 / Miyayama) (Ehrlichia sennetsu) protein is tRNA (guanine-N(1)-)-methyltransferase.